Reading from the N-terminus, the 81-residue chain is Toxin MIT1 (81 aa).

Cystine bridges form between Cys7/Cys19, Cys13/Cys31, Cys18/Cys59, Cys41/Cys67, and Cys61/Cys77.

It belongs to the AVIT (prokineticin) family. As to expression, expressed by the venom gland.

It localises to the secreted. Functionally, potent agonist for both PKR1/PROKR1 and PKR2/PROKR2. Potently contracts gastrointestinal (GI) smooth muscle. The protein is Toxin MIT1 of Dendroaspis polylepis polylepis (Black mamba).